A 207-amino-acid polypeptide reads, in one-letter code: Venom allergen 5 (207 aa).

Disulfide bonds link C4-C16, C8-C105, C29-C97, and C173-C190. One can recognise an SCP domain in the interval 48 to 192 (VDEHNRFRQK…MKSHYLVCNY (145 aa)).

This sequence belongs to the CRISP family. Venom allergen 5-like subfamily. As to quaternary structure, monomer. Expressed by the venom gland.

It localises to the secreted. This chain is Venom allergen 5, found in Polybia scutellaris rioplatensis (Camoati).